The chain runs to 943 residues: Translation initiation factor IF-2 (943 aa).

Residues 29 to 349 (LSVKSHSSSV…NNRGNSAPKL (321 aa)) form a disordered region. Composition is skewed to basic and acidic residues over residues 69–82 (PKEE…DKAS), 112–137 (FKAE…DNRN), 145–155 (QGKRHNNDRRN), 163–196 (DHNK…RDNA), and 224–253 (RQSE…EKQQ). The span at 254-266 (AEVAVQKAAAETK) shows a compositional bias: low complexity. Over residues 296-309 (KSRDNHRVNEDGPK) the composition is skewed to basic and acidic residues. Positions 313–332 (NNKWNNQNQVRNQRNSNWNK) are enriched in low complexity. Residues 445–614 (ERAPVVTIMG…LLVAEVEELK (170 aa)) form the tr-type G domain. The interval 454–461 (GHVDHGKT) is G1. A GTP-binding site is contributed by 454–461 (GHVDHGKT). Positions 479-483 (GITQH) are G2. Positions 500-503 (DTPG) are G3. Residues 500-504 (DTPGH) and 554-557 (NKID) contribute to the GTP site. Residues 554–557 (NKID) are G4. Residues 590–592 (SAK) are G5.

The protein belongs to the TRAFAC class translation factor GTPase superfamily. Classic translation factor GTPase family. IF-2 subfamily.

The protein localises to the cytoplasm. In terms of biological role, one of the essential components for the initiation of protein synthesis. Protects formylmethionyl-tRNA from spontaneous hydrolysis and promotes its binding to the 30S ribosomal subunits. Also involved in the hydrolysis of GTP during the formation of the 70S ribosomal complex. The polypeptide is Translation initiation factor IF-2 (Streptococcus thermophilus (strain ATCC BAA-491 / LMD-9)).